Here is a 150-residue protein sequence, read N- to C-terminus: 3-hydroxyacyl-[acyl-carrier-protein] dehydratase FabZ (150 aa).

The active site involves His-57.

The protein belongs to the thioester dehydratase family. FabZ subfamily.

The protein localises to the cytoplasm. The enzyme catalyses a (3R)-hydroxyacyl-[ACP] = a (2E)-enoyl-[ACP] + H2O. In terms of biological role, involved in unsaturated fatty acids biosynthesis. Catalyzes the dehydration of short chain beta-hydroxyacyl-ACPs and long chain saturated and unsaturated beta-hydroxyacyl-ACPs. This is 3-hydroxyacyl-[acyl-carrier-protein] dehydratase FabZ from Mannheimia succiniciproducens (strain KCTC 0769BP / MBEL55E).